A 142-amino-acid chain; its full sequence is Hydrogenase maturation factor HypA (142 aa).

His-2 is a binding site for Ni(2+). 4 residues coordinate Zn(2+): Cys-73, Cys-76, Cys-109, and Cys-112.

Belongs to the HypA/HybF family.

Functionally, involved in the maturation of [NiFe] hydrogenases. Required for nickel insertion into the metal center of the hydrogenase. The protein is Hydrogenase maturation factor HypA of Methanopyrus kandleri (strain AV19 / DSM 6324 / JCM 9639 / NBRC 100938).